The primary structure comprises 439 residues: Tol-Pal system protein TolB (439 aa).

The signal sequence occupies residues 1-22 (MKKPLRWLAALTALLLPLSAFA).

It belongs to the TolB family. As to quaternary structure, the Tol-Pal system is composed of five core proteins: the inner membrane proteins TolA, TolQ and TolR, the periplasmic protein TolB and the outer membrane protein Pal. They form a network linking the inner and outer membranes and the peptidoglycan layer.

The protein localises to the periplasm. In terms of biological role, part of the Tol-Pal system, which plays a role in outer membrane invagination during cell division and is important for maintaining outer membrane integrity. The sequence is that of Tol-Pal system protein TolB from Xanthomonas campestris pv. campestris (strain 8004).